The chain runs to 326 residues: Transposase InsH for insertion sequence element IS5A (326 aa).

Belongs to the transposase 11 family.

Functionally, involved in the transposition of the insertion sequence IS5. The protein is Transposase InsH for insertion sequence element IS5A (insH1) of Escherichia coli (strain K12).